We begin with the raw amino-acid sequence, 123 residues long: Basic phospholipase A2 Ph-TX1 (123 aa).

Residues Y27, G29, and G31 each coordinate Ca(2+). 6 disulfide bridges follow: C28–C45, C44–C96, C50–C123, C51–C89, C59–C83, and C77–C87. Residue H48 is part of the active site. D49 provides a ligand contact to Ca(2+). D90 is an active-site residue.

Belongs to the phospholipase A2 family. Group II subfamily. D49 sub-subfamily. Monomer. The cofactor is Ca(2+). In terms of tissue distribution, expressed by the venom gland.

Its subcellular location is the secreted. The enzyme catalyses a 1,2-diacyl-sn-glycero-3-phosphocholine + H2O = a 1-acyl-sn-glycero-3-phosphocholine + a fatty acid + H(+). Its activity is regulated as follows. Inhibited by divalent cations different from calcium ions (cadmium, magnesium, manganese, zinc), since they act as competitive antagonists of this cofactor. In terms of biological role, snake venom phospholipase A2 (PLA2) that induces in vivo myotoxicity, moderates footpad edema, and causes in vitro neuromuscular blockade. PLA2 catalyzes the calcium-dependent hydrolysis of the 2-acyl groups in 3-sn-phosphoglycerides. The polypeptide is Basic phospholipase A2 Ph-TX1 (Bothrocophias hyoprora (Amazonian hognose viper)).